Reading from the N-terminus, the 393-residue chain is S-adenosylmethionine synthase 1 (393 aa).

E9 is a binding site for Mg(2+). An ATP-binding site is contributed by H15. E43 contacts K(+). 2 residues coordinate L-methionine: E56 and Q99. The residue at position 114 (C114) is an S-nitrosocysteine. ATP-binding positions include D167–K169, S235–F238, D246, R252–K253, A269, K273, and K277. D246 provides a ligand contact to L-methionine. Residue K277 coordinates L-methionine.

The protein belongs to the AdoMet synthase family. Homotetramer. Interacts with GRF3. The cofactor is Mn(2+). It depends on Mg(2+) as a cofactor. Co(2+) serves as cofactor. Requires K(+) as cofactor. S-nitrosylated in the presence of NO. The inhibition of SAM1 activity by S-nitrosylation could contribute to the cross-talk between ethylene and NO signaling. Highly expressed in stems and roots.

The protein localises to the cytoplasm. The enzyme catalyses L-methionine + ATP + H2O = S-adenosyl-L-methionine + phosphate + diphosphate. It participates in amino-acid biosynthesis; S-adenosyl-L-methionine biosynthesis; S-adenosyl-L-methionine from L-methionine: step 1/1. With respect to regulation, reversibly inhibited by NO. Inhibited by 5,5'-dithiobis-2-nitrobenzoic acid (DTNB) and N-ethylmaleimide (NEM) (in vitro). In terms of biological role, catalyzes the formation of S-adenosylmethionine from methionine and ATP. The reaction comprises two steps that are both catalyzed by the same enzyme: formation of S-adenosylmethionine (AdoMet) and triphosphate, and subsequent hydrolysis of the triphosphate. In Arabidopsis thaliana (Mouse-ear cress), this protein is S-adenosylmethionine synthase 1 (SAM1).